Reading from the N-terminus, the 290-residue chain is uncharacterized protein (290 aa).

NAD(+) contacts are provided by residues 7–21 (AVFGLGVMGSPMAQN) and threonine 100. Lysine 175 is a catalytic residue. Lysine 243 is a binding site for NAD(+).

The protein belongs to the HIBADH-related family.

This is an uncharacterized protein from Synechocystis sp. (strain ATCC 27184 / PCC 6803 / Kazusa).